Here is a 508-residue protein sequence, read N- to C-terminus: Maturase K (508 aa).

It belongs to the intron maturase 2 family. MatK subfamily.

It localises to the plastid. It is found in the chloroplast. Usually encoded in the trnK tRNA gene intron. Probably assists in splicing its own and other chloroplast group II introns. This Gordonia lasianthus (Loblolly bay) protein is Maturase K.